A 179-amino-acid chain; its full sequence is Ribosome maturation factor RimM (179 aa).

The 73-residue stretch at 98 to 170 folds into the PRC barrel domain; it reads PDEFWDRRLR…RIVVSGIPGL (73 aa).

This sequence belongs to the RimM family. In terms of assembly, binds ribosomal protein uS19.

Its subcellular location is the cytoplasm. Its function is as follows. An accessory protein needed during the final step in the assembly of 30S ribosomal subunit, possibly for assembly of the head region. Essential for efficient processing of 16S rRNA. May be needed both before and after RbfA during the maturation of 16S rRNA. It has affinity for free ribosomal 30S subunits but not for 70S ribosomes. This chain is Ribosome maturation factor RimM, found in Cutibacterium acnes (strain DSM 16379 / KPA171202) (Propionibacterium acnes).